The sequence spans 261 residues: MEMO1 family protein AF_2310 (261 aa).

The protein belongs to the MEMO1 family.

This is MEMO1 family protein AF_2310 from Archaeoglobus fulgidus (strain ATCC 49558 / DSM 4304 / JCM 9628 / NBRC 100126 / VC-16).